The sequence spans 609 residues: ATP-dependent lipid A-core flippase (609 aa).

6 helical membrane-spanning segments follow: residues 47–67 (LLAAIGSIFFSAADASMIYLI), 88–108 (ILMLMGVGMVGLLALRSVGSF), 167–187 (AIITVVQDGTFVIGLIVVMFV), 190–210 (WQLSLFLIVVGPFLGLFISII), 279–299 (VIQIIASLVLAFSLFTIAIFG), and 305–325 (GSSWLTAGSFASFFAAAAAIL). The 294-residue stretch at 47-340 (LLAAIGSIFF…LTKVNVVIQK (294 aa)) folds into the ABC transmembrane type-1 domain. The 235-residue stretch at 372–606 (VTIKDLSFAF…GGLYTRLYQS (235 aa)) folds into the ABC transporter domain. 404–411 (GKSGSGKT) is a binding site for ATP.

The protein belongs to the ABC transporter superfamily. Lipid exporter (TC 3.A.1.106) family. In terms of assembly, homodimer.

The protein resides in the cell inner membrane. The enzyme catalyses ATP + H2O + lipid A-core oligosaccharideSide 1 = ADP + phosphate + lipid A-core oligosaccharideSide 2.. Functionally, involved in lipopolysaccharide (LPS) biosynthesis. Translocates lipid A-core from the inner to the outer leaflet of the inner membrane. Transmembrane domains (TMD) form a pore in the inner membrane and the ATP-binding domain (NBD) is responsible for energy generation. The polypeptide is ATP-dependent lipid A-core flippase (Francisella tularensis subsp. holarctica (strain LVS)).